Here is a 313-residue protein sequence, read N- to C-terminus: Probable lysophospholipase L2 (313 aa).

The protein localises to the cell inner membrane. It carries out the reaction a 1-acyl-sn-glycero-3-phosphocholine + H2O = sn-glycerol 3-phosphocholine + a fatty acid + H(+). The sequence is that of Probable lysophospholipase L2 (pldB) from Haemophilus influenzae (strain ATCC 51907 / DSM 11121 / KW20 / Rd).